A 103-amino-acid chain; its full sequence is Co-chaperonin GroES (103 aa).

It belongs to the GroES chaperonin family. As to quaternary structure, heptamer of 7 subunits arranged in a ring. Interacts with the chaperonin GroEL.

It localises to the cytoplasm. In terms of biological role, together with the chaperonin GroEL, plays an essential role in assisting protein folding. The GroEL-GroES system forms a nano-cage that allows encapsulation of the non-native substrate proteins and provides a physical environment optimized to promote and accelerate protein folding. GroES binds to the apical surface of the GroEL ring, thereby capping the opening of the GroEL channel. In Picosynechococcus sp. (strain ATCC 27264 / PCC 7002 / PR-6) (Agmenellum quadruplicatum), this protein is Co-chaperonin GroES.